Reading from the N-terminus, the 578-residue chain is Zinc finger protein with KRAB and SCAN domains 8 (578 aa).

The segment at 1-20 (MAEESRKPSAPSPPDQTPEE) is disordered. Serine 12 is modified (phosphoserine). Lysine 26 is covalently cross-linked (Glycyl lysine isopeptide (Lys-Gly) (interchain with G-Cter in SUMO2)). Residues 51–133 (RLRFRQLCYQ…TLLEDLERQI (83 aa)) form the SCAN box domain. Positions 158 to 205 (ASAPEPPNTQLQSEATQHKSPVPQESQERSMSTSQSPTRSQKGSSGDQ) are disordered. The segment covering 165-205 (NTQLQSEATQHKSPVPQESQERSMSTSQSPTRSQKGSSGDQ) has biased composition (polar residues). Glycyl lysine isopeptide (Lys-Gly) (interchain with G-Cter in SUMO2) cross-links involve residues lysine 176 and lysine 199. Position 201 is a phosphoserine (serine 201). The 97-residue stretch at 220–316 (EKIEDMAVSL…GRLERQRGNP (97 aa)) folds into the KRAB domain. Residues lysine 221, lysine 272, and lysine 288 each participate in a glycyl lysine isopeptide (Lys-Gly) (interchain with G-Cter in SUMO2) cross-link. 2 consecutive C2H2-type zinc fingers follow at residues 322-344 (HKCDECGKSFAQSSGLVRHWRIH) and 350-372 (YQCNVCGKAFSYRSALLSHQDIH). Glycyl lysine isopeptide (Lys-Gly) (interchain with G-Cter in SUMO2) cross-links involve residues lysine 374 and lysine 376. 7 C2H2-type zinc fingers span residues 378–400 (YHCKECGKAFSQNTGLILHQRIH), 406–428 (YQCNQCGKAFSQSAGLILHQRIH), 434–456 (YECNECGKAFSHSSHLIGHQRIH), 462–484 (YECDECGKTFRRSSHLIGHQRSH), 490–512 (YKCNECGRAFSQKSGLIEHQRIH), 518–540 (YKCKECGKAFNGNTGLIQHLRIH), and 546–568 (YQCNECGKAFIQRSSLIRHQRIH). Residues lysine 413 and lysine 441 each participate in a glycyl lysine isopeptide (Lys-Gly) (interchain with G-Cter in SUMO2) cross-link. Lysine 502 is covalently cross-linked (Glycyl lysine isopeptide (Lys-Gly) (interchain with G-Cter in SUMO2)). A Glycyl lysine isopeptide (Lys-Gly) (interchain with G-Cter in SUMO2) cross-link involves residue lysine 572.

It belongs to the krueppel C2H2-type zinc-finger protein family.

It localises to the nucleus. May be involved in transcriptional regulation. The polypeptide is Zinc finger protein with KRAB and SCAN domains 8 (ZKSCAN8) (Pan paniscus (Pygmy chimpanzee)).